The primary structure comprises 153 residues: Probable disulfide formation protein (153 aa).

A helical membrane pass occupies residues 4 to 23 (DTRLYLAWLVALAATLGSLY). C33 and C36 are disulfide-bonded. 2 helical membrane passes run 38-57 (AQRI…AFVG) and 64-81 (YVLP…FQNL). A disulfide bridge links C93 with C101. A helical membrane pass occupies residues 117-139 (RALTIPVLSMIAFALILALLSWP).

The protein belongs to the DsbB family. BdbC subfamily.

The protein resides in the cell membrane. Required for disulfide bond formation in some proteins. This is Probable disulfide formation protein from Deinococcus radiodurans (strain ATCC 13939 / DSM 20539 / JCM 16871 / CCUG 27074 / LMG 4051 / NBRC 15346 / NCIMB 9279 / VKM B-1422 / R1).